Consider the following 98-residue polypeptide: NADH-ubiquinone oxidoreductase chain 4L (98 aa).

3 helical membrane passes run 1-21 (MSLVYMNIIMAFTTSLVGLLM), 29-49 (SLLCLEGMMLSLFIMATLIIL), and 61-81 (IILLVFAACEAALGLSLLVMV).

Belongs to the complex I subunit 4L family. In terms of assembly, core subunit of respiratory chain NADH dehydrogenase (Complex I) which is composed of 45 different subunits.

It is found in the mitochondrion inner membrane. It carries out the reaction a ubiquinone + NADH + 5 H(+)(in) = a ubiquinol + NAD(+) + 4 H(+)(out). In terms of biological role, core subunit of the mitochondrial membrane respiratory chain NADH dehydrogenase (Complex I) which catalyzes electron transfer from NADH through the respiratory chain, using ubiquinone as an electron acceptor. Part of the enzyme membrane arm which is embedded in the lipid bilayer and involved in proton translocation. The sequence is that of NADH-ubiquinone oxidoreductase chain 4L (MT-ND4L) from Hippopotamus amphibius (Hippopotamus).